We begin with the raw amino-acid sequence, 226 residues long: 7-cyano-7-deazaguanine synthase (226 aa).

An ATP-binding site is contributed by 10 to 20; it reads LSGGLDSATAA. Positions 191, 199, 202, and 205 each coordinate Zn(2+).

It belongs to the QueC family. Zn(2+) is required as a cofactor.

It carries out the reaction 7-carboxy-7-deazaguanine + NH4(+) + ATP = 7-cyano-7-deazaguanine + ADP + phosphate + H2O + H(+). Its pathway is purine metabolism; 7-cyano-7-deazaguanine biosynthesis. Its function is as follows. Catalyzes the ATP-dependent conversion of 7-carboxy-7-deazaguanine (CDG) to 7-cyano-7-deazaguanine (preQ(0)). The sequence is that of 7-cyano-7-deazaguanine synthase from Synechococcus sp. (strain CC9311).